We begin with the raw amino-acid sequence, 477 residues long: Iroquois homeobox protein 6a (477 aa).

Positions 148–210 (GSTRRKNATR…NARRRLKKEN (63 aa)) form a DNA-binding region, homeobox. 2 disordered regions span residues 209-282 (ENKM…PDIP) and 303-323 (DYLD…QSTS). Positions 219–237 (KAGDDRKEDLDSKDSKDEQ) are enriched in basic and acidic residues. Acidic residues predominate over residues 243–253 (DLDDMEDEDCD). A compositionally biased stretch (basic and acidic residues) spans 254–264 (KLDSDCEKSGQ). The segment covering 310-321 (SKPQQQQPSPQS) has biased composition (low complexity).

It belongs to the TALE/IRO homeobox family.

It is found in the nucleus. Its function is as follows. Transcription factor. Binds to the iroquois binding site (IBS) motif of target genes to regulate gene expression; functions as a transcriptional activator or repressor. In concert with irx5a, plays a role in visual performance. The sequence is that of Iroquois homeobox protein 6a from Danio rerio (Zebrafish).